Here is a 307-residue protein sequence, read N- to C-terminus: Ribosomal protein L11 methyltransferase (307 aa).

S-adenosyl-L-methionine contacts are provided by T154, G178, D200, and N242.

This sequence belongs to the methyltransferase superfamily. PrmA family.

The protein resides in the cytoplasm. It catalyses the reaction L-lysyl-[protein] + 3 S-adenosyl-L-methionine = N(6),N(6),N(6)-trimethyl-L-lysyl-[protein] + 3 S-adenosyl-L-homocysteine + 3 H(+). In terms of biological role, methylates ribosomal protein L11. The polypeptide is Ribosomal protein L11 methyltransferase (Syntrophotalea carbinolica (strain DSM 2380 / NBRC 103641 / GraBd1) (Pelobacter carbinolicus)).